A 224-amino-acid polypeptide reads, in one-letter code: Probable C-&gt;U-editing enzyme APOBEC-2 (224 aa).

Residues 1 to 25 are disordered; it reads MAQKEEAAAAAEPASQNGEEVENLE. Zn(2+) contacts are provided by Glu60 and His98. Residues 64-169 form the CMP/dCMP-type deaminase domain; it reads GRNKTFLCYV…PEIQAALRKL (106 aa). Glu100 serves as the catalytic Proton donor. Cys128 and Cys131 together coordinate Zn(2+).

The protein belongs to the cytidine and deoxycytidylate deaminase family. In terms of assembly, homotetramer. It depends on Zn(2+) as a cofactor.

The catalysed reaction is cytidine(6666) in apoB mRNA + H2O + H(+) = uridine(6666) in apoB mRNA + NH4(+). In terms of biological role, probable C to U editing enzyme whose physiological substrate is not yet known. Does not display detectable apoB mRNA editing. Has a low intrinsic cytidine deaminase activity. May play a role in the epigenetic regulation of gene expression through the process of active DNA demethylation. This is Probable C-&gt;U-editing enzyme APOBEC-2 (APOBEC2) from Bos taurus (Bovine).